A 304-amino-acid polypeptide reads, in one-letter code: Glycine--tRNA ligase alpha subunit (304 aa).

It belongs to the class-II aminoacyl-tRNA synthetase family. Tetramer of two alpha and two beta subunits.

The protein resides in the cytoplasm. It catalyses the reaction tRNA(Gly) + glycine + ATP = glycyl-tRNA(Gly) + AMP + diphosphate. The sequence is that of Glycine--tRNA ligase alpha subunit from Yersinia pseudotuberculosis serotype O:1b (strain IP 31758).